The chain runs to 101 residues: Iron-sulfur cluster assembly protein CyaY (101 aa).

This sequence belongs to the frataxin family.

In terms of biological role, involved in iron-sulfur (Fe-S) cluster assembly. May act as a regulator of Fe-S biogenesis. The protein is Iron-sulfur cluster assembly protein CyaY of Actinobacillus pleuropneumoniae serotype 7 (strain AP76).